Consider the following 232-residue polypeptide: Large ribosomal subunit protein uL3 (232 aa).

It belongs to the universal ribosomal protein uL3 family. As to quaternary structure, part of the 50S ribosomal subunit. Forms a cluster with proteins L14 and L19.

One of the primary rRNA binding proteins, it binds directly near the 3'-end of the 23S rRNA, where it nucleates assembly of the 50S subunit. The polypeptide is Large ribosomal subunit protein uL3 (Hydrogenobaculum sp. (strain Y04AAS1)).